Reading from the N-terminus, the 401-residue chain is S-adenosylmethionine synthase (401 aa).

His16 contacts ATP. Asp18 is a Mg(2+) binding site. Glu44 lines the K(+) pocket. L-methionine-binding residues include Glu57 and Gln100. The tract at residues Gln100 to Glu110 is flexible loop. ATP is bound by residues Asp174 to Lys176, Arg241 to Phe242, Asp250, Arg256 to Lys257, Ala273, and Lys277. Asp250 contributes to the L-methionine binding site. Lys281 lines the L-methionine pocket.

Belongs to the AdoMet synthase family. As to quaternary structure, homotetramer; dimer of dimers. Requires Mg(2+) as cofactor. K(+) is required as a cofactor.

It localises to the cytoplasm. It catalyses the reaction L-methionine + ATP + H2O = S-adenosyl-L-methionine + phosphate + diphosphate. It participates in amino-acid biosynthesis; S-adenosyl-L-methionine biosynthesis; S-adenosyl-L-methionine from L-methionine: step 1/1. Its function is as follows. Catalyzes the formation of S-adenosylmethionine (AdoMet) from methionine and ATP. The overall synthetic reaction is composed of two sequential steps, AdoMet formation and the subsequent tripolyphosphate hydrolysis which occurs prior to release of AdoMet from the enzyme. The sequence is that of S-adenosylmethionine synthase from Streptococcus equi subsp. zooepidemicus (strain H70).